The following is a 273-amino-acid chain: Vacuolar membrane protein YPL162C (273 aa).

Topologically, residues 1–13 are vacuolar; sequence MYVSNGKDTCQLL. The helical transmembrane segment at 14–34 threads the bilayer; sequence GPVSLFVQTLMGMTAVIVLLV. The Cytoplasmic portion of the chain corresponds to 35–51; that stretch reads KRNYEHPRRKMIVWSYD. The chain crosses the membrane as a helical span at residues 52–72; it reads IGKQIIGSLGIHFLNLGISIL. The Vacuolar portion of the chain corresponds to 73–97; that stretch reads KKRRRSLFAITAKGNDDEDQCDWYF. Residues 98–118 form a helical membrane-spanning segment; it reads LNLLLDTTVGIPILWLCLYII. Topologically, residues 119–156 are cytoplasmic; it reads EKVLKSLHFQNIESGNYFPSKTVGSHPRKPLFSAFVKQ. A helical membrane pass occupies residues 157-177; sequence LLIFIVGLGVMKFCVFLILNY. At 178–198 the chain is on the vacuolar side; that stretch reads LEDLAYWFADLILGWSDSWPN. Residues 199 to 219 form a helical membrane-spanning segment; that stretch reads FQVFLVMFVFPILLNCFQYFC. Topologically, residues 220–273 are cytoplasmic; it reads VDNVIRLHSESLTITNAENFETNTFLNDEIPDLSEVSNEVPNKDNNISSYGSII.

It is found in the vacuole membrane. The protein is Vacuolar membrane protein YPL162C of Saccharomyces cerevisiae (strain ATCC 204508 / S288c) (Baker's yeast).